Here is a 301-residue protein sequence, read N- to C-terminus: NADH-ubiquinone oxidoreductase chain 1 (301 aa).

8 consecutive transmembrane segments (helical) span residues 4 to 24 (IIPI…VLGY), 62 to 82 (LALF…MWIP), 96 to 116 (ILFM…SGWA), 140 to 160 (LAII…STLI), 165 to 185 (YTWL…STIA), 216 to 236 (LFFL…IILF), 247 to 267 (EMYT…FLWI), and 279 to 299 (LMHL…MWHV).

This sequence belongs to the complex I subunit 1 family.

The protein localises to the mitochondrion inner membrane. The enzyme catalyses a ubiquinone + NADH + 5 H(+)(in) = a ubiquinol + NAD(+) + 4 H(+)(out). Its function is as follows. Core subunit of the mitochondrial membrane respiratory chain NADH dehydrogenase (Complex I) that is believed to belong to the minimal assembly required for catalysis. Complex I functions in the transfer of electrons from NADH to the respiratory chain. The immediate electron acceptor for the enzyme is believed to be ubiquinone. This Nyctalus noctula (Noctule bat) protein is NADH-ubiquinone oxidoreductase chain 1 (MT-ND1).